Here is a 404-residue protein sequence, read N- to C-terminus: 4-hydroxy-3-methylbut-2-en-1-yl diphosphate synthase (flavodoxin) (404 aa).

4 residues coordinate [4Fe-4S] cluster: cysteine 310, cysteine 313, cysteine 345, and glutamate 352.

Belongs to the IspG family. Requires [4Fe-4S] cluster as cofactor.

It carries out the reaction (2E)-4-hydroxy-3-methylbut-2-enyl diphosphate + oxidized [flavodoxin] + H2O + 2 H(+) = 2-C-methyl-D-erythritol 2,4-cyclic diphosphate + reduced [flavodoxin]. It participates in isoprenoid biosynthesis; isopentenyl diphosphate biosynthesis via DXP pathway; isopentenyl diphosphate from 1-deoxy-D-xylulose 5-phosphate: step 5/6. Converts 2C-methyl-D-erythritol 2,4-cyclodiphosphate (ME-2,4cPP) into 1-hydroxy-2-methyl-2-(E)-butenyl 4-diphosphate. This is 4-hydroxy-3-methylbut-2-en-1-yl diphosphate synthase (flavodoxin) from Treponema pallidum (strain Nichols).